The sequence spans 390 residues: GPI inositol-deacylase (390 aa).

The chain crosses the membrane as a helical span at residues 21 to 41 (FIVYFIICLTIIISALGVYLY). Residue serine 202 is part of the active site. Residues 354-374 (VHLLSLTIFALKWTIIVLAII) traverse the membrane as a helical segment.

The protein belongs to the GPI inositol-deacylase family.

It localises to the endoplasmic reticulum membrane. Its function is as follows. Involved in inositol deacylation of GPI-anchored proteins which plays important roles in the quality control and ER-associated degradation of GPI-anchored proteins. This chain is GPI inositol-deacylase (BST1), found in Candida albicans (strain SC5314 / ATCC MYA-2876) (Yeast).